The chain runs to 419 residues: N-acylneuraminate cytidylyltransferase (419 aa).

This sequence belongs to the CMP-NeuNAc synthase family. Monomer. May form aggregates. Mg(2+) is required as a cofactor. Requires Mn(2+) as cofactor.

The protein resides in the cytoplasm. The enzyme catalyses an N-acylneuraminate + CTP = a CMP-N-acyl-beta-neuraminate + diphosphate. Inhibited by the CTP analogs 5-mercuri-CTP and CTP-2',3'-dialdehyde. Functionally, catalyzes the formation of CMP-N-acetylneuraminic acid (CMP-NeuNAc), which is essential for the formation of the capsule. This is N-acylneuraminate cytidylyltransferase (neuA) from Escherichia coli O18:K1:H7 (strain RS218 / NMEC).